The primary structure comprises 736 residues: Microtubule-associated protein mu-2 (736 aa).

This sequence belongs to the orthoreovirus mu-2 protein family. Interacts with protein mu-NS; in viral inclusions. Interacts with polymerase lambda-3; this interaction stimulates the ATPase activity of mu-2. A divalent metal cation serves as cofactor.

Its subcellular location is the virion. It is found in the host cytoplasm. It localises to the host cytoskeleton. Minor inner capsid (core) component. Displays NTPase and RNA 5'-triphosphatase (RTPase) activities. ATP is the preferred substrate for hydrolysis. May function as a cofactor of polymerase lambda-3. Associates with microtubules and plays a role in the formation, structural organization and morphology of viral inclusions, where the assembly of cores and the replication of viral RNA occur. Together with mu-NS, recruits the other core proteins to these inclusions. This Mammalia (T2J) protein is Microtubule-associated protein mu-2 (M1).